Consider the following 716-residue polypeptide: Myogenesis-regulating glycosidase (716 aa).

The span at 1–11 (MSQNLQETSQA) shows a compositional bias: polar residues. The segment at 1–26 (MSQNLQETSQAYPRHRPGSHAGPKSL) is disordered. At 1-55 (MSQNLQETSQAYPRHRPGSHAGPKSLKVTPRATMYTFLPDNFSPAKPKPTKELRP) the chain is on the cytoplasmic side. Residues 56–76 (LLCSAVLGLLLVLAAVVAWCY) form a helical; Signal-anchor for type II membrane protein membrane-spanning segment. Residues 77–716 (YSASLRKAER…DEVAYFTWAS (640 aa)) lie on the Extracellular side of the membrane. 3 N-linked (GlcNAc...) asparagine glycosylation sites follow: Asn-239, Asn-249, and Asn-455. Active-site residues include Asp-462 and Glu-465. Asp-527 acts as the Proton donor in catalysis.

The protein belongs to the glycosyl hydrolase 31 family. In terms of assembly, interacts with IGF2; this interaction is required for IGF2 secretion. Expressed in brain, liver, spleen, skeletal muscle, heart, lung and kidney. High expression is observed in the cerebellum, specifically in astrocytes. Highly expressed in skeletal muscle (at protein level).

The protein localises to the nucleus membrane. The protein resides in the endoplasmic reticulum membrane. Its function is as follows. Putative glycosidase. Promotes myogenesis by activating AKT signaling through the maturation and secretion of IGF2. The chain is Myogenesis-regulating glycosidase (Myorg) from Mus musculus (Mouse).